The primary structure comprises 120 residues: NAD(P)H-quinone oxidoreductase subunit 3, chloroplastic (120 aa).

3 helical membrane-spanning segments follow: residues 9 to 29 (IFWAFLIISSAIPVLAFFISG), 64 to 84 (MFALVFVVFDVETVFLYPWAM), and 88 to 108 (VLGVSAFIEAFIFVLILILGL).

It belongs to the complex I subunit 3 family. In terms of assembly, NDH is composed of at least 16 different subunits, 5 of which are encoded in the nucleus.

It is found in the plastid. The protein localises to the chloroplast thylakoid membrane. The catalysed reaction is a plastoquinone + NADH + (n+1) H(+)(in) = a plastoquinol + NAD(+) + n H(+)(out). It catalyses the reaction a plastoquinone + NADPH + (n+1) H(+)(in) = a plastoquinol + NADP(+) + n H(+)(out). NDH shuttles electrons from NAD(P)H:plastoquinone, via FMN and iron-sulfur (Fe-S) centers, to quinones in the photosynthetic chain and possibly in a chloroplast respiratory chain. The immediate electron acceptor for the enzyme in this species is believed to be plastoquinone. Couples the redox reaction to proton translocation, and thus conserves the redox energy in a proton gradient. In Barbarea verna (Land cress), this protein is NAD(P)H-quinone oxidoreductase subunit 3, chloroplastic.